The primary structure comprises 245 residues: DNA polymerase sliding clamp 1 (245 aa).

This sequence belongs to the PCNA family. The subunits circularize to form a toroid; DNA passes through its center. Replication factor C (RFC) is required to load the toroid on the DNA. Forms a dimeric complex with PCNA3 and a trimeric complex with PCNA2 and PCNA3; does not form homotrimers.

Sliding clamp subunit that acts as a moving platform for DNA processing. Responsible for tethering the catalytic subunit of DNA polymerase and other proteins to DNA during high-speed replication. The trimeric complex inhibits DNA ligase and both 3'-5' and 5'-3' activity of Hel308 (Hjm) helicase, but stimulates Hjc, the Holliday junction cleavage enzyme. The protein is DNA polymerase sliding clamp 1 of Sulfurisphaera tokodaii (strain DSM 16993 / JCM 10545 / NBRC 100140 / 7) (Sulfolobus tokodaii).